The primary structure comprises 77 residues: uncharacterized protein (77 aa).

A helical membrane pass occupies residues phenylalanine 36–valine 52.

The protein resides in the membrane. This is an uncharacterized protein from Saccharomyces cerevisiae (strain ATCC 204508 / S288c) (Baker's yeast).